The chain runs to 463 residues: Flotillin-like protein 2 (463 aa).

Cysteine 35 is lipidated: S-palmitoyl cysteine. Residues 305–354 are a coiled coil; the sequence is EYETKVQEANWELYNKQKQAEAVLYEKQKQAEAQKAEADATFYSKQKEAE.

It belongs to the band 7/mec-2 family. Flotillin subfamily. In terms of processing, may be palmitoylated.

The protein resides in the cell membrane. Its subcellular location is the membrane. It localises to the caveola. Functionally, may act as a scaffolding protein within caveolar membranes, functionally participating in formation of caveolae or caveolae-like vesicles. The chain is Flotillin-like protein 2 (FLOT2) from Arabidopsis thaliana (Mouse-ear cress).